A 142-amino-acid polypeptide reads, in one-letter code: Snaclec 2 (142 aa).

The signal sequence occupies residues 1-23 (MGRFIFVSFSLLVVFLSLSGTGA). Cys-25 and Cys-36 form a disulfide bridge. The 108-residue stretch at 32–139 (YEGHCYRVFQ…CSETHNVICK (108 aa)) folds into the C-type lectin domain. Asn-43 carries N-linked (GlcNAc...) asparagine glycosylation. 2 cysteine pairs are disulfide-bonded: Cys-53–Cys-138 and Cys-115–Cys-130.

Belongs to the snaclec family. In terms of assembly, heterodimer; disulfide-linked. Expressed by the venom gland.

Its subcellular location is the secreted. Interferes with one step of hemostasis (modulation of platelet aggregation, or coagulation cascade, for example). The protein is Snaclec 2 of Sistrurus catenatus edwardsii (Desert massasauga).